A 178-amino-acid polypeptide reads, in one-letter code: ATP-dependent protease subunit HslV (178 aa).

Thr7 is an active-site residue. Residues Gly162, Cys165, and Thr168 each contribute to the Na(+) site.

This sequence belongs to the peptidase T1B family. HslV subfamily. A double ring-shaped homohexamer of HslV is capped on each side by a ring-shaped HslU homohexamer. The assembly of the HslU/HslV complex is dependent on binding of ATP.

The protein localises to the cytoplasm. It carries out the reaction ATP-dependent cleavage of peptide bonds with broad specificity.. With respect to regulation, allosterically activated by HslU binding. Functionally, protease subunit of a proteasome-like degradation complex believed to be a general protein degrading machinery. The sequence is that of ATP-dependent protease subunit HslV from Cupriavidus necator (strain ATCC 17699 / DSM 428 / KCTC 22496 / NCIMB 10442 / H16 / Stanier 337) (Ralstonia eutropha).